We begin with the raw amino-acid sequence, 127 residues long: Ribonuclease VapC6 (127 aa).

Residues 26–120 (EPQRAEFCRS…ERHLPDIRVR (95 aa)) form the PINc domain. Residue Asp86 coordinates Mg(2+).

Belongs to the PINc/VapC protein family. Mg(2+) is required as a cofactor.

Its function is as follows. Toxic component of a type II toxin-antitoxin (TA) system. An RNase. The cognate antitoxin is VapB6. This is Ribonuclease VapC6 from Mycobacterium tuberculosis (strain CDC 1551 / Oshkosh).